A 303-amino-acid chain; its full sequence is Glycine--tRNA ligase alpha subunit (303 aa).

It belongs to the class-II aminoacyl-tRNA synthetase family. In terms of assembly, tetramer of two alpha and two beta subunits.

The protein resides in the cytoplasm. It catalyses the reaction tRNA(Gly) + glycine + ATP = glycyl-tRNA(Gly) + AMP + diphosphate. This is Glycine--tRNA ligase alpha subunit from Methylobacterium radiotolerans (strain ATCC 27329 / DSM 1819 / JCM 2831 / NBRC 15690 / NCIMB 10815 / 0-1).